The chain runs to 564 residues: Pyruvate decarboxylase (564 aa).

The pyruvate site is built by D28 and H115. Residues T390 and 413–415 (GSI) each bind thiamine diphosphate. Position 444 (D444) interacts with Mg(2+). Thiamine diphosphate-binding positions include 445–446 (GS) and 471–476 (NDGYTI). Mg(2+) contacts are provided by N471 and G473. E477 provides a ligand contact to pyruvate.

It belongs to the TPP enzyme family. Homotetramer. The cofactor is Mg(2+). It depends on thiamine diphosphate as a cofactor.

It catalyses the reaction a 2-oxocarboxylate + H(+) = an aldehyde + CO2. The catalysed reaction is pyruvate + H(+) = acetaldehyde + CO2. This chain is Pyruvate decarboxylase (PDC1), found in Candida glabrata (strain ATCC 2001 / BCRC 20586 / JCM 3761 / NBRC 0622 / NRRL Y-65 / CBS 138) (Yeast).